Consider the following 292-residue polypeptide: CCR4-NOT transcription complex subunit 8 (292 aa).

Residues aspartate 40, glutamate 42, aspartate 161, and aspartate 230 each contribute to the a divalent metal cation site.

Belongs to the CAF1 family. As to quaternary structure, component of the CCR4-NOT complex; distinct complexes seem to exist that differ in the participation of probably mutually exclusive catalytic subunits; the complex contains two deadenylase subunits, CNOT6 or CNOT6L, and CNOT7 or CNOT8. In the complex interacts directly with CNOT1. Interacts with BTG1, BTG2 and TOB1. Interacts with BTG4.

Its subcellular location is the cytoplasm. The protein localises to the nucleus. It catalyses the reaction Exonucleolytic cleavage of poly(A) to 5'-AMP.. Has 3'-5' poly(A) exoribonuclease activity for synthetic poly(A) RNA substrate. Its function seems to be partially redundant with that of CNOT7. Catalytic component of the CCR4-NOT complex which is linked to various cellular processes including bulk mRNA degradation, miRNA-mediated repression, translational repression during translational initiation and general transcription regulation. During miRNA-mediated repression the complex also seems to act as translational repressor during translational initiation. Additional complex functions may be a consequence of its influence on mRNA expression. Associates with members of the BTG family such as TOB1 and BTG2 and is required for their anti-proliferative activity. The polypeptide is CCR4-NOT transcription complex subunit 8 (CNOT8) (Homo sapiens (Human)).